The sequence spans 47 residues: Sperm protamine P1 (47 aa).

It belongs to the protamine P1 family. As to expression, testis.

The protein localises to the nucleus. It localises to the chromosome. Protamines substitute for histones in the chromatin of sperm during the haploid phase of spermatogenesis. They compact sperm DNA into a highly condensed, stable and inactive complex. The sequence is that of Sperm protamine P1 (PRM1) from Orcinus orca (Killer whale).